We begin with the raw amino-acid sequence, 106 residues long: UPF0145 protein azo0572 (106 aa).

Belongs to the UPF0145 family.

The chain is UPF0145 protein azo0572 from Azoarcus sp. (strain BH72).